A 596-amino-acid polypeptide reads, in one-letter code: A-type ATP synthase subunit A (596 aa).

An ATP-binding site is contributed by 241–248 (GPFGSGKT).

This sequence belongs to the ATPase alpha/beta chains family. Has multiple subunits with at least A(3), B(3), C, D, E, F, H, I and proteolipid K(x).

It localises to the cell membrane. The enzyme catalyses ATP + H2O + 4 H(+)(in) = ADP + phosphate + 5 H(+)(out). Its function is as follows. Component of the A-type ATP synthase that produces ATP from ADP in the presence of a proton gradient across the membrane. The A chain is the catalytic subunit. The chain is A-type ATP synthase subunit A from Ignicoccus hospitalis (strain KIN4/I / DSM 18386 / JCM 14125).